A 501-amino-acid polypeptide reads, in one-letter code: Pentatricopeptide repeat-containing protein At2g36730 (501 aa).

PPR repeat units follow at residues 77–111 (TPST…GIKP), 112–146 (NKLT…GFDF), 147–177 (DVYV…MTER), 178–212 (NVVS…RFCP), 213–243 (DETT…VREL), 246–276 (NCRL…MVDK), 277–312 (NVWT…SVRP), 313–343 (NYVT…MEKI), and 349–379 (MMIH…MPFE). The segment at 384 to 462 (VWRTLLSACS…IAGESCLELG (79 aa)) is type E motif. The type E(+) motif stretch occupies residues 463–493 (GSFHRFFSGYDPRSEYVSIYELLDLFKFQLT).

It belongs to the PPR family. PCMP-E subfamily.

The chain is Pentatricopeptide repeat-containing protein At2g36730 (PCMP-E44) from Arabidopsis thaliana (Mouse-ear cress).